An 870-amino-acid polypeptide reads, in one-letter code: Probable inorganic carbon transporter subunit DabA (870 aa).

Zn(2+) is bound by residues Cys381, Asp383, His564, and Cys579.

The protein belongs to the inorganic carbon transporter (TC 9.A.2) DabA family. Forms a complex with DabB. Zn(2+) is required as a cofactor.

It is found in the cell membrane. Part of an energy-coupled inorganic carbon pump. This is Probable inorganic carbon transporter subunit DabA from Geobacillus kaustophilus (strain HTA426).